The following is a 432-amino-acid chain: Enolase (432 aa).

Q167 contributes to the (2R)-2-phosphoglycerate binding site. E209 serves as the catalytic Proton donor. Mg(2+) contacts are provided by D246, E287, and D314. Positions 339, 368, 369, and 390 each coordinate (2R)-2-phosphoglycerate. K339 serves as the catalytic Proton acceptor.

The protein belongs to the enolase family. The cofactor is Mg(2+).

The protein resides in the cytoplasm. It localises to the secreted. The protein localises to the cell surface. It carries out the reaction (2R)-2-phosphoglycerate = phosphoenolpyruvate + H2O. It participates in carbohydrate degradation; glycolysis; pyruvate from D-glyceraldehyde 3-phosphate: step 4/5. Its function is as follows. Catalyzes the reversible conversion of 2-phosphoglycerate (2-PG) into phosphoenolpyruvate (PEP). It is essential for the degradation of carbohydrates via glycolysis. This is Enolase from Prochlorococcus marinus (strain SARG / CCMP1375 / SS120).